The following is a 242-amino-acid chain: NH(3)-dependent NAD(+) synthetase (242 aa).

27-34 contributes to the ATP binding site; the sequence is GISGGIDS. Aspartate 33 contacts Mg(2+). Residue arginine 109 coordinates deamido-NAD(+). Threonine 129 is an ATP binding site. Glutamate 134 lines the Mg(2+) pocket. 2 residues coordinate deamido-NAD(+): lysine 142 and aspartate 149. ATP contacts are provided by lysine 158 and threonine 180. 231–232 contacts deamido-NAD(+); that stretch reads HK.

This sequence belongs to the NAD synthetase family. As to quaternary structure, homodimer.

It catalyses the reaction deamido-NAD(+) + NH4(+) + ATP = AMP + diphosphate + NAD(+) + H(+). It functions in the pathway cofactor biosynthesis; NAD(+) biosynthesis; NAD(+) from deamido-NAD(+) (ammonia route): step 1/1. Its function is as follows. Catalyzes the ATP-dependent amidation of deamido-NAD to form NAD. Uses ammonia as a nitrogen source. This chain is NH(3)-dependent NAD(+) synthetase, found in Thermoplasma volcanium (strain ATCC 51530 / DSM 4299 / JCM 9571 / NBRC 15438 / GSS1).